The sequence spans 354 residues: Sphingosine-1-phosphate phosphatase 2 (354 aa).

Transmembrane regions (helical) follow at residues Tyr-43–Phe-63, Leu-76–Trp-96, Tyr-115–Ser-135, and Tyr-140–Leu-160. Positions Lys-91–Pro-99 are phosphatase sequence motif I. The segment at Pro-118–His-121 is phosphatase sequence motif II. Catalysis depends on His-121, which acts as the Proton donor. The tract at residues Ser-161 to Asp-172 is phosphatase sequence motif III. The active-site Nucleophile is the His-168. 5 helical membrane-spanning segments follow: residues Ile-173–Leu-193, Pro-202–Ser-222, Ile-235–Val-255, Thr-273–Val-293, and Thr-334–Leu-354.

The protein belongs to the type 2 lipid phosphate phosphatase family. In terms of tissue distribution, highly expressed in pancreatic islets. Expressed in lung, small interstince, colon, kideny and brain.

It localises to the endoplasmic reticulum membrane. The enzyme catalyses sphinganine 1-phosphate + H2O = sphinganine + phosphate. It catalyses the reaction sphing-4-enine 1-phosphate + H2O = sphing-4-enine + phosphate. It carries out the reaction (4R)-hydroxysphinganine 1-phosphate + H2O = (4R)-hydroxysphinganine + phosphate. Has specific phosphohydrolase activity towards sphingoid base 1-phosphates. Has high phosphohydrolase activity against dihydrosphingosine-1-phosphate and sphingosine-1-phosphate (S1P) in vitro. Sphingosine-1-phosphate phosphatase activity is needed for efficient recycling of sphingosine into the sphingolipid synthesis pathway. May play a role in attenuating intracellular sphingosine 1-phosphate (S1P) signaling. May play a role in pro-inflammatory signaling. Plays a role in the regulation of pancreatic islet beta-cell endoplasmic reticulum stress and proliferation. In Mus musculus (Mouse), this protein is Sphingosine-1-phosphate phosphatase 2.